The sequence spans 122 residues: Large ribosomal subunit protein uL14 (122 aa).

It belongs to the universal ribosomal protein uL14 family. As to quaternary structure, part of the 50S ribosomal subunit. Forms a cluster with proteins L3 and L19. In the 70S ribosome, L14 and L19 interact and together make contacts with the 16S rRNA in bridges B5 and B8.

Binds to 23S rRNA. Forms part of two intersubunit bridges in the 70S ribosome. The protein is Large ribosomal subunit protein uL14 of Desulforamulus reducens (strain ATCC BAA-1160 / DSM 100696 / MI-1) (Desulfotomaculum reducens).